The following is a 348-amino-acid chain: Inosamine-phosphate amidinotransferase 1 (348 aa).

Residues D179 and H227 contribute to the active site. Catalysis depends on C332, which acts as the Amidino-cysteine intermediate.

Belongs to the amidinotransferase family. In terms of assembly, homodimer.

The catalysed reaction is 1-amino-1-deoxy-scyllo-inositol 4-phosphate + L-arginine = 1-guanidino-1-deoxy-scyllo-inositol 4-phosphate + L-ornithine. It functions in the pathway antibiotic biosynthesis; streptomycin biosynthesis. In terms of biological role, catalyzes two non-consecutive transamidination reactions. It converts scyllo-inosamine 4-phosphate into N-amidino-scyllo-inosamine 4-phosphate and N1-amidinostreptamine 6-phosphate into streptidine 6-phosphate. The sequence is that of Inosamine-phosphate amidinotransferase 1 (strB1) from Streptomyces glaucescens.